The chain runs to 517 residues: Probable bifunctional methylthioribulose-1-phosphate dehydratase/enolase-phosphatase E1 1 (517 aa).

Residues Met1–Asp240 are methylthioribulose-1-phosphate dehydratase. Cys112 is a binding site for substrate. Zn(2+) is bound by residues His130 and His132. Glu155 serves as the catalytic Proton donor/acceptor; for methylthioribulose-1-phosphate dehydratase activity. Residue His205 coordinates Zn(2+). The enolase-phosphatase E1 stretch occupies residues Ile278 to Ile517. Positions 281 and 283 each coordinate Mg(2+). Substrate-binding positions include Ser416 to Ser417 and Lys450. Position 476 (Asp476) interacts with Mg(2+).

It in the N-terminal section; belongs to the aldolase class II family. MtnB subfamily. The protein in the C-terminal section; belongs to the HAD-like hydrolase superfamily. MasA/MtnC family. The cofactor is Zn(2+). It depends on Mg(2+) as a cofactor.

The catalysed reaction is 5-(methylsulfanyl)-D-ribulose 1-phosphate = 5-methylsulfanyl-2,3-dioxopentyl phosphate + H2O. The enzyme catalyses 5-methylsulfanyl-2,3-dioxopentyl phosphate + H2O = 1,2-dihydroxy-5-(methylsulfanyl)pent-1-en-3-one + phosphate. Its pathway is amino-acid biosynthesis; L-methionine biosynthesis via salvage pathway; L-methionine from S-methyl-5-thio-alpha-D-ribose 1-phosphate: step 2/6. The protein operates within amino-acid biosynthesis; L-methionine biosynthesis via salvage pathway; L-methionine from S-methyl-5-thio-alpha-D-ribose 1-phosphate: step 3/6. It participates in amino-acid biosynthesis; L-methionine biosynthesis via salvage pathway; L-methionine from S-methyl-5-thio-alpha-D-ribose 1-phosphate: step 4/6. The sequence is that of Probable bifunctional methylthioribulose-1-phosphate dehydratase/enolase-phosphatase E1 1 from Vitis vinifera (Grape).